The primary structure comprises 706 residues: DNA ligase (706 aa).

Residues 47-51 (DSEYD), 96-97 (SI), and Glu-133 contribute to the NAD(+) site. Lys-135 functions as the N6-AMP-lysine intermediate in the catalytic mechanism. Residues Arg-156, Glu-192, Lys-323, and Lys-347 each contribute to the NAD(+) site. The Zn(2+) site is built by Cys-441, Cys-444, Cys-459, and Cys-465. Residues 624–706 (VAPKPLSGKT…MRLLASAEAE (83 aa)) enclose the BRCT domain.

Belongs to the NAD-dependent DNA ligase family. LigA subfamily. Requires Mg(2+) as cofactor. It depends on Mn(2+) as a cofactor.

The catalysed reaction is NAD(+) + (deoxyribonucleotide)n-3'-hydroxyl + 5'-phospho-(deoxyribonucleotide)m = (deoxyribonucleotide)n+m + AMP + beta-nicotinamide D-nucleotide.. Functionally, DNA ligase that catalyzes the formation of phosphodiester linkages between 5'-phosphoryl and 3'-hydroxyl groups in double-stranded DNA using NAD as a coenzyme and as the energy source for the reaction. It is essential for DNA replication and repair of damaged DNA. The protein is DNA ligase of Polaromonas sp. (strain JS666 / ATCC BAA-500).